The chain runs to 55 residues: uncharacterized protein (55 aa).

This is an uncharacterized protein from Sulfolobus islandicus rod-shaped virus 1 (SIRV-1).